The chain runs to 574 residues: Septation ring formation regulator EzrA (574 aa).

At 1 to 7 the chain is on the extracellular side; sequence MSIGLVI. The helical transmembrane segment at 8-26 threads the bilayer; it reads LVAVVALLLVVGYGTAVLM. Coiled-coil stretches lie at residues 26–47, 105–189, 258–346, 375–415, and 455–494; these read MRKRNEALLQNLEERKEALYNL, KAKH…QFVT, ESRF…FLIS, SETK…IEKD, and STSNNIEELVKELEATRVNIESVNRWLEILGNDMEQLEEE. Topologically, residues 27–574 are cytoplasmic; the sequence is RKRNEALLQN…YEKTRENIRF (548 aa).

It belongs to the EzrA family.

It localises to the cell membrane. In terms of biological role, negative regulator of FtsZ ring formation; modulates the frequency and position of FtsZ ring formation. Inhibits FtsZ ring formation at polar sites. Interacts either with FtsZ or with one of its binding partners to promote depolymerization. This chain is Septation ring formation regulator EzrA, found in Streptococcus sanguinis (strain SK36).